Reading from the N-terminus, the 222-residue chain is Thiamine-phosphate synthase (222 aa).

4-amino-2-methyl-5-(diphosphooxymethyl)pyrimidine is bound by residues 42–46 (QYRDK) and N74. D75 and D94 together coordinate Mg(2+). 4-amino-2-methyl-5-(diphosphooxymethyl)pyrimidine is bound at residue T113. Residue 140-142 (SAT) participates in 2-[(2R,5Z)-2-carboxy-4-methylthiazol-5(2H)-ylidene]ethyl phosphate binding. K143 is a 4-amino-2-methyl-5-(diphosphooxymethyl)pyrimidine binding site. 2-[(2R,5Z)-2-carboxy-4-methylthiazol-5(2H)-ylidene]ethyl phosphate is bound at residue G169.

The protein belongs to the thiamine-phosphate synthase family. Mg(2+) is required as a cofactor.

The enzyme catalyses 2-[(2R,5Z)-2-carboxy-4-methylthiazol-5(2H)-ylidene]ethyl phosphate + 4-amino-2-methyl-5-(diphosphooxymethyl)pyrimidine + 2 H(+) = thiamine phosphate + CO2 + diphosphate. It carries out the reaction 2-(2-carboxy-4-methylthiazol-5-yl)ethyl phosphate + 4-amino-2-methyl-5-(diphosphooxymethyl)pyrimidine + 2 H(+) = thiamine phosphate + CO2 + diphosphate. It catalyses the reaction 4-methyl-5-(2-phosphooxyethyl)-thiazole + 4-amino-2-methyl-5-(diphosphooxymethyl)pyrimidine + H(+) = thiamine phosphate + diphosphate. Its pathway is cofactor biosynthesis; thiamine diphosphate biosynthesis; thiamine phosphate from 4-amino-2-methyl-5-diphosphomethylpyrimidine and 4-methyl-5-(2-phosphoethyl)-thiazole: step 1/1. Its function is as follows. Condenses 4-methyl-5-(beta-hydroxyethyl)thiazole monophosphate (THZ-P) and 2-methyl-4-amino-5-hydroxymethyl pyrimidine pyrophosphate (HMP-PP) to form thiamine monophosphate (TMP). The chain is Thiamine-phosphate synthase from Marinobacter nauticus (strain ATCC 700491 / DSM 11845 / VT8) (Marinobacter aquaeolei).